We begin with the raw amino-acid sequence, 641 residues long: 1-deoxy-D-xylulose-5-phosphate synthase (641 aa).

Thiamine diphosphate-binding positions include His-71 and Ser-112–Ala-114. Mg(2+) is bound at residue Asp-144. Residues Gly-145 to Ala-146, Asn-173, Tyr-284, and Glu-365 contribute to the thiamine diphosphate site. Asn-173 contributes to the Mg(2+) binding site.

It belongs to the transketolase family. DXPS subfamily. In terms of assembly, homodimer. Requires Mg(2+) as cofactor. The cofactor is thiamine diphosphate.

It carries out the reaction D-glyceraldehyde 3-phosphate + pyruvate + H(+) = 1-deoxy-D-xylulose 5-phosphate + CO2. The protein operates within metabolic intermediate biosynthesis; 1-deoxy-D-xylulose 5-phosphate biosynthesis; 1-deoxy-D-xylulose 5-phosphate from D-glyceraldehyde 3-phosphate and pyruvate: step 1/1. Catalyzes the acyloin condensation reaction between C atoms 2 and 3 of pyruvate and glyceraldehyde 3-phosphate to yield 1-deoxy-D-xylulose-5-phosphate (DXP). The protein is 1-deoxy-D-xylulose-5-phosphate synthase of Mycobacterium avium (strain 104).